Consider the following 397-residue polypeptide: Exodeoxyribonuclease 7 large subunit (397 aa).

This sequence belongs to the XseA family. Heterooligomer composed of large and small subunits.

Its subcellular location is the cytoplasm. It carries out the reaction Exonucleolytic cleavage in either 5'- to 3'- or 3'- to 5'-direction to yield nucleoside 5'-phosphates.. Its function is as follows. Bidirectionally degrades single-stranded DNA into large acid-insoluble oligonucleotides, which are then degraded further into small acid-soluble oligonucleotides. The chain is Exodeoxyribonuclease 7 large subunit from Anaplasma marginale (strain Florida).